A 149-amino-acid chain; its full sequence is Arginine repressor (149 aa).

It belongs to the ArgR family.

Its subcellular location is the cytoplasm. It participates in amino-acid biosynthesis; L-arginine biosynthesis [regulation]. Its function is as follows. Regulates arginine biosynthesis genes. In Shouchella clausii (strain KSM-K16) (Alkalihalobacillus clausii), this protein is Arginine repressor.